The following is a 500-amino-acid chain: Aspartyl/glutamyl-tRNA(Asn/Gln) amidotransferase subunit B (500 aa).

Belongs to the GatB/GatE family. GatB subfamily. In terms of assembly, heterotrimer of A, B and C subunits.

The enzyme catalyses L-glutamyl-tRNA(Gln) + L-glutamine + ATP + H2O = L-glutaminyl-tRNA(Gln) + L-glutamate + ADP + phosphate + H(+). The catalysed reaction is L-aspartyl-tRNA(Asn) + L-glutamine + ATP + H2O = L-asparaginyl-tRNA(Asn) + L-glutamate + ADP + phosphate + 2 H(+). In terms of biological role, allows the formation of correctly charged Asn-tRNA(Asn) or Gln-tRNA(Gln) through the transamidation of misacylated Asp-tRNA(Asn) or Glu-tRNA(Gln) in organisms which lack either or both of asparaginyl-tRNA or glutaminyl-tRNA synthetases. The reaction takes place in the presence of glutamine and ATP through an activated phospho-Asp-tRNA(Asn) or phospho-Glu-tRNA(Gln). This chain is Aspartyl/glutamyl-tRNA(Asn/Gln) amidotransferase subunit B, found in Brucella melitensis biotype 2 (strain ATCC 23457).